The primary structure comprises 215 residues: 3-isopropylmalate dehydratase small subunit (215 aa).

This sequence belongs to the LeuD family. LeuD type 1 subfamily. In terms of assembly, heterodimer of LeuC and LeuD.

It carries out the reaction (2R,3S)-3-isopropylmalate = (2S)-2-isopropylmalate. The protein operates within amino-acid biosynthesis; L-leucine biosynthesis; L-leucine from 3-methyl-2-oxobutanoate: step 2/4. In terms of biological role, catalyzes the isomerization between 2-isopropylmalate and 3-isopropylmalate, via the formation of 2-isopropylmaleate. The protein is 3-isopropylmalate dehydratase small subunit of Teredinibacter turnerae (strain ATCC 39867 / T7901).